A 532-amino-acid chain; its full sequence is CTP synthase (532 aa).

The interval Met-1 to Leu-265 is amidoligase domain. Ser-12 contacts CTP. Residue Ser-12 participates in UTP binding. ATP is bound by residues Gly-13 to Ile-18 and Asp-70. Positions 70 and 140 each coordinate Mg(2+). CTP is bound by residues Asp-147–Glu-149, Lys-186–Gln-191, and Lys-222. Residues Lys-186–Gln-191 and Lys-222 contribute to the UTP site. One can recognise a Glutamine amidotransferase type-1 domain in the interval Ser-289–Glu-529. Position 349 (Gly-349) interacts with L-glutamine. The active-site Nucleophile; for glutamine hydrolysis is the Cys-376. L-glutamine contacts are provided by residues Phe-377–Gln-380, Glu-400, and Arg-457. Catalysis depends on residues His-502 and Glu-504.

It belongs to the CTP synthase family. In terms of assembly, homotetramer.

The catalysed reaction is UTP + L-glutamine + ATP + H2O = CTP + L-glutamate + ADP + phosphate + 2 H(+). The enzyme catalyses L-glutamine + H2O = L-glutamate + NH4(+). It carries out the reaction UTP + NH4(+) + ATP = CTP + ADP + phosphate + 2 H(+). The protein operates within pyrimidine metabolism; CTP biosynthesis via de novo pathway; CTP from UDP: step 2/2. Its activity is regulated as follows. Allosterically activated by GTP, when glutamine is the substrate; GTP has no effect on the reaction when ammonia is the substrate. The allosteric effector GTP functions by stabilizing the protein conformation that binds the tetrahedral intermediate(s) formed during glutamine hydrolysis. Inhibited by the product CTP, via allosteric rather than competitive inhibition. Functionally, catalyzes the ATP-dependent amination of UTP to CTP with either L-glutamine or ammonia as the source of nitrogen. Regulates intracellular CTP levels through interactions with the four ribonucleotide triphosphates. This Archaeoglobus fulgidus (strain ATCC 49558 / DSM 4304 / JCM 9628 / NBRC 100126 / VC-16) protein is CTP synthase.